A 130-amino-acid chain; its full sequence is UPF0212 protein PF1486 (130 aa).

It belongs to the UPF0212 family.

This Pyrococcus furiosus (strain ATCC 43587 / DSM 3638 / JCM 8422 / Vc1) protein is UPF0212 protein PF1486.